The following is a 772-amino-acid chain: Larval serum protein 1 gamma chain (772 aa).

A signal peptide spans 1-16; it reads MKLTLVILALVACVTA. Asn-242 carries an N-linked (GlcNAc...) asparagine glycan.

It belongs to the hemocyanin family. Heterohexamer, composed of three subunits, alpha, beta and gamma. Larval hemolymph.

The protein localises to the secreted. Its subcellular location is the extracellular space. In terms of biological role, larval storage protein (LSP) which may serve as a store of amino acids for synthesis of adult proteins. This chain is Larval serum protein 1 gamma chain (Lsp1gamma), found in Drosophila melanogaster (Fruit fly).